A 421-amino-acid polypeptide reads, in one-letter code: Serine--tRNA ligase (421 aa).

231-233 (TAE) is a binding site for L-serine. 262–264 (RRE) is a binding site for ATP. E285 contributes to the L-serine binding site. 349–352 (EISS) contributes to the ATP binding site. Position 384 (S384) interacts with L-serine.

The protein belongs to the class-II aminoacyl-tRNA synthetase family. Type-1 seryl-tRNA synthetase subfamily. Homodimer. The tRNA molecule binds across the dimer.

The protein resides in the cytoplasm. It catalyses the reaction tRNA(Ser) + L-serine + ATP = L-seryl-tRNA(Ser) + AMP + diphosphate + H(+). The catalysed reaction is tRNA(Sec) + L-serine + ATP = L-seryl-tRNA(Sec) + AMP + diphosphate + H(+). It functions in the pathway aminoacyl-tRNA biosynthesis; selenocysteinyl-tRNA(Sec) biosynthesis; L-seryl-tRNA(Sec) from L-serine and tRNA(Sec): step 1/1. Its function is as follows. Catalyzes the attachment of serine to tRNA(Ser). Is also able to aminoacylate tRNA(Sec) with serine, to form the misacylated tRNA L-seryl-tRNA(Sec), which will be further converted into selenocysteinyl-tRNA(Sec). The chain is Serine--tRNA ligase from Hydrogenobaculum sp. (strain Y04AAS1).